The primary structure comprises 194 residues: Peptidyl-tRNA hydrolase (194 aa).

A tRNA-binding site is contributed by Tyr17. His22 serves as the catalytic Proton acceptor. TRNA contacts are provided by Tyr68, Asn70, and Asn116.

Belongs to the PTH family. As to quaternary structure, monomer.

It localises to the cytoplasm. The catalysed reaction is an N-acyl-L-alpha-aminoacyl-tRNA + H2O = an N-acyl-L-amino acid + a tRNA + H(+). Its function is as follows. Hydrolyzes ribosome-free peptidyl-tRNAs (with 1 or more amino acids incorporated), which drop off the ribosome during protein synthesis, or as a result of ribosome stalling. Functionally, catalyzes the release of premature peptidyl moieties from peptidyl-tRNA molecules trapped in stalled 50S ribosomal subunits, and thus maintains levels of free tRNAs and 50S ribosomes. The sequence is that of Peptidyl-tRNA hydrolase from Pseudomonas fluorescens (strain ATCC BAA-477 / NRRL B-23932 / Pf-5).